The sequence spans 198 residues: Thymidine kinase (198 aa).

Residues 9–16 (GTMNSGKS) and 85–88 (DEAQ) contribute to the ATP site. The Proton acceptor role is filled by Glu-86. Residues Cys-143, Cys-146, Cys-180, and His-183 each contribute to the Zn(2+) site.

The protein belongs to the thymidine kinase family. Homotetramer.

It is found in the cytoplasm. It catalyses the reaction thymidine + ATP = dTMP + ADP + H(+). In Streptococcus thermophilus (strain ATCC BAA-250 / LMG 18311), this protein is Thymidine kinase.